A 496-amino-acid chain; its full sequence is Lysine--tRNA ligase (496 aa).

Mg(2+) contacts are provided by glutamate 408 and glutamate 415.

The protein belongs to the class-II aminoacyl-tRNA synthetase family. As to quaternary structure, homodimer. The cofactor is Mg(2+).

It is found in the cytoplasm. It catalyses the reaction tRNA(Lys) + L-lysine + ATP = L-lysyl-tRNA(Lys) + AMP + diphosphate. The sequence is that of Lysine--tRNA ligase from Legionella pneumophila (strain Paris).